Here is a 243-residue protein sequence, read N- to C-terminus: 1-(5-phosphoribosyl)-5-[(5-phosphoribosylamino)methylideneamino] imidazole-4-carboxamide isomerase (243 aa).

Asp8 acts as the Proton acceptor in catalysis. Residue Asp128 is the Proton donor of the active site.

It belongs to the HisA/HisF family.

The protein resides in the cytoplasm. The enzyme catalyses 1-(5-phospho-beta-D-ribosyl)-5-[(5-phospho-beta-D-ribosylamino)methylideneamino]imidazole-4-carboxamide = 5-[(5-phospho-1-deoxy-D-ribulos-1-ylimino)methylamino]-1-(5-phospho-beta-D-ribosyl)imidazole-4-carboxamide. It functions in the pathway amino-acid biosynthesis; L-histidine biosynthesis; L-histidine from 5-phospho-alpha-D-ribose 1-diphosphate: step 4/9. The protein is 1-(5-phosphoribosyl)-5-[(5-phosphoribosylamino)methylideneamino] imidazole-4-carboxamide isomerase of Opitutus terrae (strain DSM 11246 / JCM 15787 / PB90-1).